The following is a 227-amino-acid chain: Large ribosomal subunit protein bL25 (227 aa).

Residues 1–22 (MAETKTLAAAARHGTGKGAARS) form a disordered region.

Belongs to the bacterial ribosomal protein bL25 family. CTC subfamily. Part of the 50S ribosomal subunit; part of the 5S rRNA/L5/L18/L25 subcomplex. Contacts the 5S rRNA. Binds to the 5S rRNA independently of L5 and L18.

In terms of biological role, this is one of the proteins that binds to the 5S RNA in the ribosome where it forms part of the central protuberance. The sequence is that of Large ribosomal subunit protein bL25 from Methylocella silvestris (strain DSM 15510 / CIP 108128 / LMG 27833 / NCIMB 13906 / BL2).